Here is a 396-residue protein sequence, read N- to C-terminus: G-protein coupled receptor 84 (396 aa).

The Extracellular segment spans residues Met-1 to Tyr-21. N-linked (GlcNAc...) asparagine glycosylation is found at Asn-3 and Asn-8. The helical transmembrane segment at Phe-22–Leu-42 threads the bilayer. The Cytoplasmic segment spans residues Leu-43–Leu-57. A helical membrane pass occupies residues Leu-58–Val-78. Residues Asp-79–Arg-94 lie on the Extracellular side of the membrane. Residues Ile-95 to Ala-115 traverse the membrane as a helical segment. Over Leu-116–Lys-135 the chain is Cytoplasmic. A helical transmembrane segment spans residues Gly-136–Trp-156. Topologically, residues Asn-157–Thr-180 are extracellular. A helical membrane pass occupies residues Ile-181–Ile-201. The Cytoplasmic portion of the chain corresponds to His-202–Met-320. Phosphoserine is present on residues Ser-221 and Ser-224. The interval Leu-241–Ala-310 is disordered. The span at Gly-253–Gly-269 shows a compositional bias: polar residues. 2 positions are modified to phosphothreonine: Thr-263 and Thr-264. Residues Ser-290–Thr-308 show a composition bias toward basic and acidic residues. A helical transmembrane segment spans residues Cys-321 to Leu-341. The Extracellular portion of the chain corresponds to Asp-342–His-352. A helical transmembrane segment spans residues Met-353–Met-373. Topologically, residues Asn-374–His-396 are cytoplasmic.

This sequence belongs to the G-protein coupled receptor 1 family. As to quaternary structure, interacts with ARRB2 and ARR3. In terms of processing, phosphorylated by a subset of GPR84-activating ligands. Constitutively phosphorylated at Ser-221 and Ser-224 in the absence of 2-HTP. By contrast, Thr-263 and Thr-264 are phosphorylated only following prior cell treatment with 2-HTP. Expressed predominantly in hematopoietic tissues. Expressed mainly in the bone marrow with transcripts also detected in spleen, the lymph node, liver and the lung.

It is found in the cell membrane. Functionally, g protein-coupled receptor that responds endogenously to dietary fatty acids or nutrient, specifically medium-chain free fatty acid (FFA) with carbon chain lengths of C9 to C14. Capric acid (C10:0), undecanoic acid (C11:0) and lauric acid (C12:0) are the most potent agonists. In immune cells, functions as a pro-inflammatory receptor via 6-OAU and promotes the expression of pro-inflammatory mediators such as TNFalpha, IL-6 and IL-12B as well as stimulating chemotactic responses through activation of signaling mediators AKT, ERK and NF-kappa-B (by sim). In addition, triggers increased bacterial adhesion and phagocytosis in macrophages and regulates pro-inflammatory function via enhancing NLRP3 inflammasome activation. Also plays an important role in inflammation by modulating neutrophil functions. Mechanistically, promotes neutrophil chemotaxis, reactive oxygen species (ROS) production and degranulation via LYN-AKT/ERK pathway. To regulate ROS production, communicates with the two formyl peptide receptors FPR2 and FPR1 to control the NADPH oxidase activity in neutrophils. This is G-protein coupled receptor 84 (Gpr84) from Mus musculus (Mouse).